Reading from the N-terminus, the 261-residue chain is Cytochrome c oxidase subunit 3 (261 aa).

The Mitochondrial matrix segment spans residues 1–15 (MAHQAHAYHMVDPSP). Residues 16–34 (WPLTGAIAALLLTSGTAVW) form a helical membrane-spanning segment. At 35 to 40 (FHFHSL) the chain is on the mitochondrial intermembrane side. The helical transmembrane segment at 41–66 (TLLTLGNILLLLTMYQWWRDIIREGT) threads the bilayer. Residues 67–72 (FQGHHT) are Mitochondrial matrix-facing. A helical membrane pass occupies residues 73-105 (PPVQKGLRYGMILFITSEVFFFLGFFWAFYHAS). Residues 106–128 (LAPTPELGGCWPPTGITTLDPFE) lie on the Mitochondrial intermembrane side of the membrane. Residues 129–152 (VPLLNTAVLLASGVTVTWAHHSIM) traverse the membrane as a helical segment. Residues 153–155 (EGE) are Mitochondrial matrix-facing. Residues 156-183 (RKQTIQALTLTILLGFYFTFLQGMEYYE) traverse the membrane as a helical segment. At 184–190 (APFTIAD) the chain is on the mitochondrial intermembrane side. Residues 191–223 (GVYGSTFFVATGFHGLHVIIGSTFLAVCLLRQV) form a helical membrane-spanning segment. Residues 224–232 (QYHFTSEHH) are Mitochondrial matrix-facing. A helical membrane pass occupies residues 233 to 256 (FGFEAAAWYWHFVDVVWLFLYVSI). The Mitochondrial intermembrane segment spans residues 257–261 (YWWGS).

This sequence belongs to the cytochrome c oxidase subunit 3 family. As to quaternary structure, component of the cytochrome c oxidase (complex IV, CIV), a multisubunit enzyme composed of 14 subunits. The complex is composed of a catalytic core of 3 subunits MT-CO1, MT-CO2 and MT-CO3, encoded in the mitochondrial DNA, and 11 supernumerary subunits COX4I, COX5A, COX5B, COX6A, COX6B, COX6C, COX7A, COX7B, COX7C, COX8 and NDUFA4, which are encoded in the nuclear genome. The complex exists as a monomer or a dimer and forms supercomplexes (SCs) in the inner mitochondrial membrane with NADH-ubiquinone oxidoreductase (complex I, CI) and ubiquinol-cytochrome c oxidoreductase (cytochrome b-c1 complex, complex III, CIII), resulting in different assemblies (supercomplex SCI(1)III(2)IV(1) and megacomplex MCI(2)III(2)IV(2)).

The protein localises to the mitochondrion inner membrane. It carries out the reaction 4 Fe(II)-[cytochrome c] + O2 + 8 H(+)(in) = 4 Fe(III)-[cytochrome c] + 2 H2O + 4 H(+)(out). Component of the cytochrome c oxidase, the last enzyme in the mitochondrial electron transport chain which drives oxidative phosphorylation. The respiratory chain contains 3 multisubunit complexes succinate dehydrogenase (complex II, CII), ubiquinol-cytochrome c oxidoreductase (cytochrome b-c1 complex, complex III, CIII) and cytochrome c oxidase (complex IV, CIV), that cooperate to transfer electrons derived from NADH and succinate to molecular oxygen, creating an electrochemical gradient over the inner membrane that drives transmembrane transport and the ATP synthase. Cytochrome c oxidase is the component of the respiratory chain that catalyzes the reduction of oxygen to water. Electrons originating from reduced cytochrome c in the intermembrane space (IMS) are transferred via the dinuclear copper A center (CU(A)) of subunit 2 and heme A of subunit 1 to the active site in subunit 1, a binuclear center (BNC) formed by heme A3 and copper B (CU(B)). The BNC reduces molecular oxygen to 2 water molecules using 4 electrons from cytochrome c in the IMS and 4 protons from the mitochondrial matrix. The protein is Cytochrome c oxidase subunit 3 (mt-co3) of Oncorhynchus clarkii (Cutthroat trout).